Reading from the N-terminus, the 238-residue chain is Probable solute-binding protein AdeT2 (238 aa).

The protein belongs to the bacterial solute-binding protein 7 family.

In terms of biological role, mediates antimicrobial resistance via active efflux. Contributes to resistance to antibiotics such as chloramphenicol, erythromycin and novobiocin. May be part of a tripartite ATP-independent periplasmic (TRAP) transport system. The chain is Probable solute-binding protein AdeT2 from Acinetobacter baumannii.